Here is a 166-residue protein sequence, read N- to C-terminus: PTS system glucose-specific EIIA component (166 aa).

The region spanning 34-138 is the PTS EIIA type-1 domain; the sequence is DPVFAQKMMG…SVISPIIITN (105 aa). Residues histidine 71 and histidine 86 each contribute to the Zn(2+) site. Histidine 86 (tele-phosphohistidine intermediate; for EIIA activity) is an active-site residue. Histidine 86 is modified (phosphohistidine; by HPr).

As to quaternary structure, heterodimer with glycerol kinase (glpk). The cofactor is Zn(2+).

Its subcellular location is the cytoplasm. In terms of biological role, the phosphoenolpyruvate-dependent sugar phosphotransferase system (sugar PTS), a major carbohydrate active transport system, catalyzes the phosphorylation of incoming sugar substrates concomitantly with their translocation across the cell membrane. The enzyme II complex composed of PtsG and Crr is involved in glucose transport. The polypeptide is PTS system glucose-specific EIIA component (crr) (Staphylococcus aureus (strain Mu50 / ATCC 700699)).